The chain runs to 181 residues: Protein OPG005 (181 aa).

In Vaccinia virus (strain Copenhagen) (VACV), this protein is Protein OPG005 (OPG005).